Here is a 293-residue protein sequence, read N- to C-terminus: Ribonuclease HII (293 aa).

Residues 81–271 (THIAGVDEAG…VREALGLPTG (191 aa)) form the RNase H type-2 domain. A divalent metal cation is bound by residues aspartate 87, glutamate 88, and aspartate 180. Positions 273–293 (PPSALQAELFPEAPSRTGVKS) are disordered.

This sequence belongs to the RNase HII family. Mn(2+) is required as a cofactor. Requires Mg(2+) as cofactor.

The protein localises to the cytoplasm. The catalysed reaction is Endonucleolytic cleavage to 5'-phosphomonoester.. Endonuclease that specifically degrades the RNA of RNA-DNA hybrids. The polypeptide is Ribonuclease HII (Myxococcus xanthus (strain DK1622)).